A 346-amino-acid chain; its full sequence is Short-chain dehydrogenase/reductase bet4 (346 aa).

The interval 1 to 35 (MTPAKAPSHAKKPEAGSQPISSMWTQMFPPKPTYT) is disordered. NADP(+) contacts are provided by Val-56, Lys-80, Asp-105, and Asn-132. Catalysis depends on Ser-191, which acts as the Proton donor. The NADP(+) site is built by Tyr-222 and Lys-226. Tyr-222 functions as the Proton acceptor in the catalytic mechanism. Lys-226 functions as the Lowers pKa of active site Tyr in the catalytic mechanism.

It belongs to the short-chain dehydrogenases/reductases (SDR) family.

The catalysed reaction is dehydroprobetaenone I + AH2 = probetaenone I + A. Its pathway is mycotoxin biosynthesis. Functionally, short-chain dehydrogenase/reductase; part of the gene cluster that mediates the biosynthesis of betaenones, phytotoxic polyketides involved in leaf spot disease in sugar beets. The first step of the pathway is the synthesis of dehydroprobetaenone I by the polyketide synthase bet1 and the enoyl reductase bet3 via condensation of one acetyl-CoA starter unit with 7 malonyl-CoA units and 5 methylations. The C-terminal reductase (R) domain of bet1 catalyzes the reductive release of the polyketide chain. Because bet1 lacks a designated enoylreductase (ER) domain, the required activity is provided the enoyl reductase bet3. The short-chain dehydrogenase/reductase bet4 then catalyzes reduction of dehydroprobetaenone I to probetaenone I. The cytochrome P450 monooxygenase bet2 catalyzes successive epoxidation, oxidation (resulting from epoxide opening) and hydroxylation to install a tertiary alcohol in the decaline ring to yield betaenone C from dehydroprobetaenone I and betaenone B from probetaenone I. The FAD-linked oxidoreductase (orf1) is probably responsible for the conversion of betaenone C to betaenone A via an intramolecular aldol reaction between C-1 and C-17 to form the bridged tricyclic system in betaenone A. This is Short-chain dehydrogenase/reductase bet4 from Neocamarosporium betae (Beet black rot fungus).